The following is a 184-amino-acid chain: Ribosome maturation factor RimM (184 aa).

The PRC barrel domain occupies D111–Y184.

This sequence belongs to the RimM family. In terms of assembly, binds ribosomal protein uS19.

Its subcellular location is the cytoplasm. Functionally, an accessory protein needed during the final step in the assembly of 30S ribosomal subunit, possibly for assembly of the head region. Essential for efficient processing of 16S rRNA. May be needed both before and after RbfA during the maturation of 16S rRNA. It has affinity for free ribosomal 30S subunits but not for 70S ribosomes. This Ralstonia nicotianae (strain ATCC BAA-1114 / GMI1000) (Ralstonia solanacearum) protein is Ribosome maturation factor RimM.